The following is a 244-amino-acid chain: DNA polymerase sliding clamp (244 aa).

It belongs to the PCNA family. Homotrimer. The subunits circularize to form a toroid; DNA passes through its center. Replication factor C (RFC) is required to load the toroid on the DNA.

Sliding clamp subunit that acts as a moving platform for DNA processing. Responsible for tethering the catalytic subunit of DNA polymerase and other proteins to DNA during high-speed replication. The sequence is that of DNA polymerase sliding clamp from Methanothrix thermoacetophila (strain DSM 6194 / JCM 14653 / NBRC 101360 / PT) (Methanosaeta thermophila).